We begin with the raw amino-acid sequence, 2109 residues long: General transcription factor 3C polypeptide 1 (2109 aa).

The interval 467-521 (LPEGEDTFLSESDSEEERSSSKRRGRGSQKDTRASANLRPKTQPHHSTPTKGGWK) is disordered. Over residues 469–482 (EGEDTFLSESDSEE) the composition is skewed to acidic residues. A Glycyl lysine isopeptide (Lys-Gly) (interchain with G-Cter in SUMO2) cross-link involves residue Lys529. Residues 586–609 (MENPKESSSSLKTGRHSSGQDKPH) form a disordered region. Ser667 is modified (phosphoserine). Residues 718–727 (STANRVKTSQ) show a composition bias toward polar residues. The segment at 718 to 775 (STANRVKTSQPPVPQGEAEEDSQGKEGPSGSGDSQLSASSRSESGRMKKSDNKMGITP) is disordered. Ser739 carries the post-translational modification Phosphoserine. The span at 748–759 (SGDSQLSASSRS) shows a compositional bias: low complexity. A compositionally biased stretch (basic and acidic residues) spans 760–769 (ESGRMKKSDN). Glycyl lysine isopeptide (Lys-Gly) (interchain with G-Cter in SUMO2) cross-links involve residues Lys770 and Lys833. Disordered stretches follow at residues 836–857 (SGRA…SEAP) and 1059–1082 (RKNS…ESAM). Phosphoserine occurs at positions 1062 and 1068. Positions 1073–1082 (SLQKEQESAM) are enriched in basic and acidic residues. Lys1142 participates in a covalent cross-link: Glycyl lysine isopeptide (Lys-Gly) (interchain with G-Cter in SUMO2). The interval 1202 to 1241 (SLDRNRRVRGGKSQKRKRLKKDPGKKIKRKKKGEFPGEKS) is disordered. Residues 1207–1221 (RRVRGGKSQKRKRLK) show a composition bias toward basic residues. 2 positions are modified to phosphoserine: Ser1253 and Ser1611. A disordered region spans residues 1608–1631 (KDGSLEDDEDEEDDLDEGVGGKRR). The span at 1612–1624 (LEDDEDEEDDLDE) shows a compositional bias: acidic residues. Phosphoserine is present on residues Ser1632 and Ser1653. Residues 1823–1833 (EDADIQREDPQ) are compositionally biased toward basic and acidic residues. A disordered region spans residues 1823 to 1961 (EDADIQREDP…GSEDPRGFTE (139 aa)). Residues 1838–1848 (EGSSSEDSPPE) show a composition bias toward low complexity. Ser1856, Ser1865, Ser1868, Ser1896, and Ser1911 each carry phosphoserine. A compositionally biased stretch (low complexity) spans 1916–1926 (LEDTAAAGAAQ). Positions 1937 to 1947 (SPGQEQLSGQA) are enriched in polar residues. Ser1969 is modified (phosphoserine).

It belongs to the TFIIIC subunit 1 family. In terms of assembly, part of the TFIIIC subcomplex TFIIIC2, consisting of six subunits, GTF3C1, GTF3C2, GTF3C3, GTF3C4, GTF3C5 and GTF3C6. Interacts with IGHMBP2. Interacts with MAF1.

It is found in the nucleus. In terms of biological role, required for RNA polymerase III-mediated transcription. Component of TFIIIC that initiates transcription complex assembly on tRNA and is required for transcription of 5S rRNA and other stable nuclear and cytoplasmic RNAs. Binds to the box B promoter element. This Homo sapiens (Human) protein is General transcription factor 3C polypeptide 1 (GTF3C1).